A 417-amino-acid polypeptide reads, in one-letter code: Putative F-box protein At3g58950 (417 aa).

Positions Met1–Glu53 constitute an F-box domain.

This chain is Putative F-box protein At3g58950, found in Arabidopsis thaliana (Mouse-ear cress).